We begin with the raw amino-acid sequence, 333 residues long: L-lactate dehydrogenase B chain (333 aa).

NAD(+) contacts are provided by residues 29–57 (GQVG…WEDK) and Arg-99. Substrate contacts are provided by Arg-106, Asn-138, and Arg-169. Residue Asn-138 participates in NAD(+) binding. His-193 serves as the catalytic Proton acceptor. Thr-248 is a substrate binding site.

Belongs to the LDH/MDH superfamily. LDH family. Homotetramer.

It localises to the cytoplasm. The enzyme catalyses (S)-lactate + NAD(+) = pyruvate + NADH + H(+). It participates in fermentation; pyruvate fermentation to lactate; (S)-lactate from pyruvate: step 1/1. In terms of biological role, interconverts simultaneously and stereospecifically pyruvate and lactate with concomitant interconversion of NADH and NAD(+). This is L-lactate dehydrogenase B chain (LDHB) from Trachemys scripta elegans (Red-eared slider turtle).